A 381-amino-acid polypeptide reads, in one-letter code: D-rhamnosyltransferase WbpZ (381 aa).

Substrate-binding residues include E19, H116, K206, and V252.

It belongs to the glycosyltransferase group 1 family. Glycosyltransferase 4 subfamily.

Its subcellular location is the cytoplasm. It carries out the reaction GDP-alpha-D-rhamnose + N-acetyl-alpha-D-glucosaminyl-di-trans,octa-cis-undecaprenyl diphosphate = alpha-D-rhamnosyl-(1-&gt;3)-N-acetyl-alpha-D-glucosaminyl-1-diphospho-di-trans,octa-cis-undecaprenol + GDP + H(+). The catalysed reaction is GDP-alpha-D-rhamnose + N-acetyl-alpha-D-galactosaminyl-di-trans,octa-cis-undecaprenyl diphosphate = alpha-D-rhamnosyl-(1-&gt;3)-N-acetyl-alpha-D-galactosaminyl-1-diphospho-di-trans,octa-cis-undecaprenol + GDP + H(+). It catalyses the reaction N-acetyl-alpha-D-glucosaminyl-di-trans,octa-cis-undecaprenyl diphosphate + GDP-alpha-D-mannose = alpha-D-mannosyl-(1-&gt;3)-N-acetyl-alpha-D-glucosaminyl-di-trans,octa-cis-undecaprenyl diphosphate + GDP + H(+). The enzyme catalyses N-acetyl-alpha-D-galactosaminyl-di-trans,octa-cis-undecaprenyl diphosphate + GDP-alpha-D-mannose = alpha-D-mannosyl-(1-&gt;3)-N-acetyl-alpha-D-galctosaminyl-1-diphospho-di-trans,octa-cis-undecaprenol + GDP + H(+). It functions in the pathway lipopolysaccharide biosynthesis; LPS oligosaccharide biosynthesis. With respect to regulation, not activated by dithiothreitol (DTT) using GlcNAc-alpha-PO(3)-PO(3)-phenylundecyl (GlcNAc-PP-PhU) as acceptor substrate. 0.25% Triton X-100 and 0.125% NP-40 increases the activity 2.5-fold and 2-fold, respectively. 0.125% octyl glucoside has little effect on activity. Slightly increased activity with Mg(2+) and Pb(2+), while no effect with Mn(2+), Co(2+), Ni(2+), Cu(2+), Zn(2+), Ca(2+) or EDTA. Not inhibited by N-butyryl-galactosamine-alpha-benzyl or N-butyryl-glucosamine-beta-benzyl. Bis-imidazolium salts having aliphatic spacer groups with 4 or 6 carbons have little effect on activity, but spacer groups of 18-22 aliphatic carbons inhibit activity, with the most potent inhibitor being bis-imidazolium salt having a 20-carbon chain spacer length. In terms of biological role, non-processive alpha-1,3-D-rhamnosyltransferase. Catalyzes the transfer of one D-rhamnose (D-Rha) residue from donor substrate GDP-D-Rha in alpha-1-3 linkage to both GlcNAc- and GalNAc-diphosphate-lipid acceptor substrates. Is also able to transfer D-mannose (D-Man) to these acceptors at a lower level. Nucleotide sugars GDP-D-Rha, GDP-Fuc, UDP-Gal, UDP-GalNAc, UDP-GlcNAc and CMP-sialic acid cannot act as donor substrates. Only compounds with a diphosphate as the aglycone group can act as acceptor substrates. No activity is detected with compounds containing a diphosphate mimic. Fluorescent undecyl-anthracenyl group-containing compounds, such as GlcNAc-PO(3)-PO(3)-AnthrU and GalNAc-PO(3)-PO(3)-AnthrU, are also good acceptor substrates. Involved in the biosynthesis of the common polysaccharide antigen (CPA), also called A band, which is one of the two major cell surface O-antigens of the P.aeruginosa lipopolysaccharide. Involved in susceptibility to antibiotic colistin. The chain is D-rhamnosyltransferase WbpZ from Pseudomonas aeruginosa (strain ATCC 15692 / DSM 22644 / CIP 104116 / JCM 14847 / LMG 12228 / 1C / PRS 101 / PAO1).